A 394-amino-acid chain; its full sequence is MAKEKFERSKPHVNIGTIGHVDHGKTTLTAAITTVLAKKGLSELRSFDSIDNAPEEKERGITINTSHVEYQTANRHYAHVDCPGHADYVKNMVTGAAQMDGAIIVCAATDGPMPQTREHILLARQVNVPRLVVFLNKCDMVDDEEMLELVEMEMRELLSFYDFDGDNTPIIRGSALGALNGVPQWEDKVMELMDAVDTWIPLPPRDIDKPFLMPVEDVFSITGRGTVATGRIEAGIIHVGDEVEILGLGEDKKSVVTGVEMFRKLLDQGEAGDNVGLLLRGIDKNEIKRGMILCKPGQVKAHSKFKAEVYILKKEEGGRHTPFHNKYRPQFYLRTMDCTGEITLPEGTEMVMPGDNVTITVELIYPVALNVGLRFAIREGGRTVGAGQITELLD.

Residues 10 to 205 enclose the tr-type G domain; that stretch reads KPHVNIGTIG…VDTWIPLPPR (196 aa). The G1 stretch occupies residues 19-26; that stretch reads GHVDHGKT. 19–26 is a GTP binding site; that stretch reads GHVDHGKT. T26 is a Mg(2+) binding site. Residues 60–64 are G2; it reads GITIN. Residues 81 to 84 are G3; that stretch reads DCPG. Residues 81–85 and 136–139 contribute to the GTP site; these read DCPGH and NKCD. The G4 stretch occupies residues 136–139; it reads NKCD. The G5 stretch occupies residues 174–176; the sequence is SAL.

The protein belongs to the TRAFAC class translation factor GTPase superfamily. Classic translation factor GTPase family. EF-Tu/EF-1A subfamily. In terms of assembly, monomer.

It localises to the cytoplasm. It carries out the reaction GTP + H2O = GDP + phosphate + H(+). Its function is as follows. GTP hydrolase that promotes the GTP-dependent binding of aminoacyl-tRNA to the A-site of ribosomes during protein biosynthesis. This is Elongation factor Tu from Phocaeicola vulgatus (strain ATCC 8482 / DSM 1447 / JCM 5826 / CCUG 4940 / NBRC 14291 / NCTC 11154) (Bacteroides vulgatus).